The sequence spans 388 residues: Processive diacylglycerol beta-glucosyltransferase (388 aa).

It belongs to the glycosyltransferase 28 family. UgtP subfamily.

It is found in the cell membrane. The enzyme catalyses a 1,2-diacyl-3-O-(beta-D-glucopyranosyl)-sn-glycerol + UDP-alpha-D-glucose = a 1,2-diacyl-3-O-(beta-D-Glc-(1-&gt;6)-beta-D-Glc)-sn-glycerol + UDP + H(+). It carries out the reaction a 1,2-diacyl-3-O-(beta-D-Glc-(1-&gt;6)-beta-D-Glc)-sn-glycerol + UDP-alpha-D-glucose = a 1,2-diacyl-3-O-(beta-D-Glc-(1-&gt;6)-beta-D-Glc-(1-&gt;6)-beta-D-Glc)-sn-glycerol + UDP + H(+). It catalyses the reaction a 1,2-diacyl-sn-glycerol + UDP-alpha-D-glucose = a 1,2-diacyl-3-O-(beta-D-glucopyranosyl)-sn-glycerol + UDP + H(+). Its pathway is glycolipid metabolism; diglucosyl-diacylglycerol biosynthesis. Processive glucosyltransferase involved in the biosynthesis of both the bilayer- and non-bilayer-forming membrane glucolipids. Is able to successively transfer up to three glucosyl residues to diacylglycerol (DAG), thereby catalyzing the formation of beta-monoglucosyl-DAG (3-O-(beta-D-glucopyranosyl)-1,2-diacyl-sn-glycerol), beta-diglucosyl-DAG (3-O-(beta-D-glucopyranosyl-beta-(1-&gt;6)-D-glucopyranosyl)-1,2-diacyl-sn-glycerol) and beta-triglucosyl-DAG (3-O-(beta-D-glucopyranosyl-beta-(1-&gt;6)-D-glucopyranosyl-beta-(1-&gt;6)-D-glucopyranosyl)-1,2-diacyl-sn-glycerol). Beta-diglucosyl-DAG is the predominant glycolipid found in Bacillales and is also used as a membrane anchor for lipoteichoic acid (LTA). The protein is Processive diacylglycerol beta-glucosyltransferase of Bacillus cereus (strain ATCC 14579 / DSM 31 / CCUG 7414 / JCM 2152 / NBRC 15305 / NCIMB 9373 / NCTC 2599 / NRRL B-3711).